The sequence spans 343 residues: 3-dehydroquinate synthase (343 aa).

NAD(+) is bound by residues 61-66 (SGEKYK), 95-96 (GV), 119-120 (TT), Lys132, Lys141, Asn142, and 159-162 (FLKT). Zn(2+)-binding residues include Glu174, His231, and His248.

The protein belongs to the sugar phosphate cyclases superfamily. Dehydroquinate synthase family. Homodimer. NAD(+) serves as cofactor. It depends on Co(2+) as a cofactor. The cofactor is Zn(2+).

The protein localises to the cytoplasm. It catalyses the reaction 7-phospho-2-dehydro-3-deoxy-D-arabino-heptonate = 3-dehydroquinate + phosphate. It participates in metabolic intermediate biosynthesis; chorismate biosynthesis; chorismate from D-erythrose 4-phosphate and phosphoenolpyruvate: step 2/7. Its function is as follows. Catalyzes the conversion of 3-deoxy-D-arabino-heptulosonate 7-phosphate (DAHP) to dehydroquinate (DHQ). The chain is 3-dehydroquinate synthase from Helicobacter pylori (strain ATCC 700392 / 26695) (Campylobacter pylori).